A 301-amino-acid polypeptide reads, in one-letter code: Tetrahydromethanopterin S-methyltransferase subunit E (301 aa).

The next 5 helical transmembrane spans lie at 85–105, 130–150, 151–171, 232–252, and 258–278; these read VIFA…TYCI, HTPV…VVSY, IMVA…IWGI, PVTG…TAVF, and LTMG…LIIW.

This sequence belongs to the MtrE family. In terms of assembly, the complex is composed of 8 subunits; MtrA, MtrB, MtrC, MtrD, MtrE, MtrF, MtrG and MtrH.

Its subcellular location is the cell membrane. The enzyme catalyses 5-methyl-5,6,7,8-tetrahydromethanopterin + coenzyme M + 2 Na(+)(in) = 5,6,7,8-tetrahydromethanopterin + methyl-coenzyme M + 2 Na(+)(out). Part of a complex that catalyzes the formation of methyl-coenzyme M and tetrahydromethanopterin from coenzyme M and methyl-tetrahydromethanopterin. This is an energy-conserving, sodium-ion translocating step. The polypeptide is Tetrahydromethanopterin S-methyltransferase subunit E (Methanococcoides burtonii (strain DSM 6242 / NBRC 107633 / OCM 468 / ACE-M)).